A 359-amino-acid chain; its full sequence is Phospho-N-acetylmuramoyl-pentapeptide-transferase (359 aa).

10 helical membrane-spanning segments follow: residues 3–23, 55–75, 80–100, 117–137, 156–176, 187–207, 231–251, 255–275, 280–300, and 334–354; these read QILI…PVLI, VAIL…GLAF, IGAS…VGFI, TAKT…VLQF, IATV…IVSA, LDGL…LITF, LALI…WNAA, IFMG…LSVT, ILAV…VLQI, and FWLL…GEWL.

It belongs to the glycosyltransferase 4 family. MraY subfamily. The cofactor is Mg(2+).

Its subcellular location is the cell membrane. The catalysed reaction is UDP-N-acetyl-alpha-D-muramoyl-L-alanyl-gamma-D-glutamyl-meso-2,6-diaminopimeloyl-D-alanyl-D-alanine + di-trans,octa-cis-undecaprenyl phosphate = di-trans,octa-cis-undecaprenyl diphospho-N-acetyl-alpha-D-muramoyl-L-alanyl-D-glutamyl-meso-2,6-diaminopimeloyl-D-alanyl-D-alanine + UMP. It participates in cell wall biogenesis; peptidoglycan biosynthesis. Its function is as follows. Catalyzes the initial step of the lipid cycle reactions in the biosynthesis of the cell wall peptidoglycan: transfers peptidoglycan precursor phospho-MurNAc-pentapeptide from UDP-MurNAc-pentapeptide onto the lipid carrier undecaprenyl phosphate, yielding undecaprenyl-pyrophosphoryl-MurNAc-pentapeptide, known as lipid I. The protein is Phospho-N-acetylmuramoyl-pentapeptide-transferase of Mycobacterium tuberculosis (strain ATCC 25177 / H37Ra).